The primary structure comprises 407 residues: Peptidase T (407 aa).

Residue histidine 82 participates in Zn(2+) binding. Aspartate 84 is an active-site residue. Zn(2+) is bound at residue aspartate 143. The active-site Proton acceptor is glutamate 177. Zn(2+) is bound by residues glutamate 178, aspartate 200, and histidine 382.

The protein belongs to the peptidase M20B family. It depends on Zn(2+) as a cofactor.

It is found in the cytoplasm. The enzyme catalyses Release of the N-terminal residue from a tripeptide.. Cleaves the N-terminal amino acid of tripeptides. This is Peptidase T from Streptococcus thermophilus (strain ATCC BAA-491 / LMD-9).